An 82-amino-acid polypeptide reads, in one-letter code: Small ribosomal subunit protein bS16 (82 aa).

It belongs to the bacterial ribosomal protein bS16 family.

The chain is Small ribosomal subunit protein bS16 from Clostridium botulinum (strain ATCC 19397 / Type A).